The primary structure comprises 374 residues: Alginate lyase (374 aa).

Positions 1–23 (MHKTRLALSCLLGSLLLSGAVHA) are cleaved as a signal peptide. Substrate is bound by residues 62–63 (SK), 135–136 (HT), and Tyr-253.

This sequence belongs to the polysaccharide lyase 5 family.

The protein resides in the periplasm. The catalysed reaction is Eliminative cleavage of alginate to give oligosaccharides with 4-deoxy-alpha-L-erythro-hex-4-enuronosyl groups at their non-reducing ends and beta-D-mannuronate at their reducing end.. Its function is as follows. Catalyzes the depolymerization of alginate by cleaving the beta-1,4 glycosidic bond between two adjacent sugar residues via a beta-elimination mechanism. May serve to degrade mislocalized alginate that is trapped in the periplasmic space. This chain is Alginate lyase, found in Azotobacter vinelandii (strain DJ / ATCC BAA-1303).